The primary structure comprises 1165 residues: Pesticidal crystal protein Cry1Da (1165 aa).

The protein belongs to the delta endotoxin family.

Functionally, promotes colloidosmotic lysis by binding to the midgut epithelial cells of many lepidopteran larvae. This is Pesticidal crystal protein Cry1Da (cry1Da) from Bacillus thuringiensis subsp. aizawai.